The following is a 142-amino-acid chain: Large ribosomal subunit protein uL13 (142 aa).

Belongs to the universal ribosomal protein uL13 family. Part of the 50S ribosomal subunit.

This protein is one of the early assembly proteins of the 50S ribosomal subunit, although it is not seen to bind rRNA by itself. It is important during the early stages of 50S assembly. The sequence is that of Large ribosomal subunit protein uL13 from Psychrobacter arcticus (strain DSM 17307 / VKM B-2377 / 273-4).